The sequence spans 456 residues: NADH-quinone oxidoreductase subunit N (456 aa).

14 helical membrane-spanning segments follow: residues 6-26 (LFAL…MLLA), 45-65 (VAAL…GALF), 75-95 (TAYA…AGVA), 97-117 (EAPA…GAGH), 118-138 (AATL…LFAF), 151-171 (FLVM…LIYA), 181-201 (WVGH…GLAF), 220-240 (PAGA…IAIL), 252-272 (LWSA…NVLA), 281-301 (MLGY…ASGA), 308-328 (VLFY…ASAM), 355-375 (GLLS…LYLF), 382-402 (ESWI…YYYI), and 426-446 (LLLI…LVLI).

The protein belongs to the complex I subunit 2 family. As to quaternary structure, NDH-1 is composed of 14 different subunits. Subunits NuoA, H, J, K, L, M, N constitute the membrane sector of the complex.

The protein resides in the cell inner membrane. The catalysed reaction is a quinone + NADH + 5 H(+)(in) = a quinol + NAD(+) + 4 H(+)(out). In terms of biological role, NDH-1 shuttles electrons from NADH, via FMN and iron-sulfur (Fe-S) centers, to quinones in the respiratory chain. The immediate electron acceptor for the enzyme in this species is believed to be ubiquinone. Couples the redox reaction to proton translocation (for every two electrons transferred, four hydrogen ions are translocated across the cytoplasmic membrane), and thus conserves the redox energy in a proton gradient. The chain is NADH-quinone oxidoreductase subunit N from Rhodopseudomonas palustris (strain BisA53).